The primary structure comprises 310 residues: Vomeronasal type-1 receptor 44 (310 aa).

Over Met1–Glu20 the chain is Extracellular. The chain crosses the membrane as a helical span at residues Val21–Gly41. Topologically, residues Glu42–Leu50 are cytoplasmic. The helical transmembrane segment at Tyr51–Val71 threads the bilayer. The Extracellular portion of the chain corresponds to Asp72–Arg93. Cys85 and Cys172 are oxidised to a cystine. Residues Phe94–Leu114 traverse the membrane as a helical segment. Residues Ser115–His131 lie on the Cytoplasmic side of the membrane. Residues Ile132 to Val152 traverse the membrane as a helical segment. The Extracellular segment spans residues Ser153–Ala190. An N-linked (GlcNAc...) asparagine glycan is attached at Asn159. Residues Ile191–Leu211 traverse the membrane as a helical segment. The Cytoplasmic portion of the chain corresponds to Trp212 to Arg238. A helical membrane pass occupies residues Thr239 to His259. Residues Ser260–Ser268 are Extracellular-facing. A helical transmembrane segment spans residues Ile269–Phe289. Residues Ile290–Ile310 are Cytoplasmic-facing.

The protein belongs to the G-protein coupled receptor 1 family.

Its subcellular location is the cell membrane. Putative pheromone receptor implicated in the regulation of social and reproductive behavior. This chain is Vomeronasal type-1 receptor 44 (Vmn1r44), found in Mus musculus (Mouse).